Reading from the N-terminus, the 186-residue chain is Elongation factor P (186 aa).

Residue R32 is glycosylated (N-alpha-linked (Rha) arginine).

This sequence belongs to the elongation factor P family. Glycosylated ar Arg-32 by EarP: arginine rhamnosylation is required for EF-P function and rescue of polyproline stalled ribosomes.

The protein localises to the cytoplasm. The protein operates within protein biosynthesis; polypeptide chain elongation. In terms of biological role, involved in peptide bond synthesis. Stimulates efficient translation and peptide-bond synthesis on native or reconstituted 70S ribosomes in vitro. Probably functions indirectly by altering the affinity of the ribosome for aminoacyl-tRNA, thus increasing their reactivity as acceptors for peptidyl transferase. The protein is Elongation factor P of Shewanella oneidensis (strain ATCC 700550 / JCM 31522 / CIP 106686 / LMG 19005 / NCIMB 14063 / MR-1).